The sequence spans 804 residues: Lon protease (804 aa).

The interval 1-23 (MSADSENETSESSPAGEATASTS) is disordered. The Lon N-terminal domain occupies 30–224 (LILLPVRNAV…KVLDAVAGRI (195 aa)). Residue 376–383 (GPPGVGKT) participates in ATP binding. One can recognise a Lon proteolytic domain in the interval 612–793 (TSLPGVVTGL…DDAVREIIED (182 aa)). Active-site residues include S699 and K742.

This sequence belongs to the peptidase S16 family. In terms of assembly, homohexamer. Organized in a ring with a central cavity.

The protein resides in the cytoplasm. It carries out the reaction Hydrolysis of proteins in presence of ATP.. In terms of biological role, ATP-dependent serine protease that mediates the selective degradation of mutant and abnormal proteins as well as certain short-lived regulatory proteins. Required for cellular homeostasis and for survival from DNA damage and developmental changes induced by stress. Degrades polypeptides processively to yield small peptide fragments that are 5 to 10 amino acids long. Binds to DNA in a double-stranded, site-specific manner. This is Lon protease from Paraburkholderia phytofirmans (strain DSM 17436 / LMG 22146 / PsJN) (Burkholderia phytofirmans).